Reading from the N-terminus, the 586-residue chain is Actin-related protein 9 (586 aa).

Positions 141 to 169 are disordered; the sequence is STPIVDKDADVDPLQRSTPDDTEPNSEEN.

This sequence belongs to the actin family. ARP8 subfamily.

The polypeptide is Actin-related protein 9 (ARP9) (Oryza sativa subsp. japonica (Rice)).